Here is a 259-residue protein sequence, read N- to C-terminus: Transcription factor bHLH125 (259 aa).

Residues 73–125 enclose the bHLH domain; sequence SKKMKHRDIERQRRQEVSSLFKRLRTLLPFQYIQGKRSTSDHIVQAVNYIKDL.

As to quaternary structure, homodimer.

The protein localises to the nucleus. This chain is Transcription factor bHLH125 (BHLH125), found in Arabidopsis thaliana (Mouse-ear cress).